A 178-amino-acid chain; its full sequence is Single-stranded DNA-binding protein DdrB (178 aa).

The disordered stretch occupies residues 139–178 (RYAVPGSNRPQAGAPARSAATRAQGARPGAVAVQDEETPF). A compositionally biased stretch (low complexity) spans 147-165 (RPQAGAPARSAATRAQGAR).

Homopentamer; arranged in a ring-structure.

In terms of biological role, ssDNA-binding protein that probably contributes to the ionizing radiation resistance of D.geothermalis. Plays a role in DNA repair and genome reconstitution, in a RecA-independent process, and is necessary for recovery from severe genomic fragmentation as a result of exposure to severe levels of ionizing radiation. Binds single-stranded DNA but not duplex DNA. The polypeptide is Single-stranded DNA-binding protein DdrB (ddrB) (Deinococcus geothermalis (strain DSM 11300 / CIP 105573 / AG-3a)).